The sequence spans 390 residues: Glutamyl-tRNA reductase (390 aa).

Substrate contacts are provided by residues threonine 46–arginine 49, serine 96, glutamate 101–glutamine 103, and glutamine 107. Cysteine 47 serves as the catalytic Nucleophile. Glycine 176–alanine 181 serves as a coordination point for NADP(+).

Belongs to the glutamyl-tRNA reductase family. Homodimer.

The enzyme catalyses (S)-4-amino-5-oxopentanoate + tRNA(Glu) + NADP(+) = L-glutamyl-tRNA(Glu) + NADPH + H(+). It functions in the pathway porphyrin-containing compound metabolism; protoporphyrin-IX biosynthesis; 5-aminolevulinate from L-glutamyl-tRNA(Glu): step 1/2. Its function is as follows. Catalyzes the NADPH-dependent reduction of glutamyl-tRNA(Glu) to glutamate 1-semialdehyde (GSA). This chain is Glutamyl-tRNA reductase, found in Thermus thermophilus (strain ATCC 27634 / DSM 579 / HB8).